We begin with the raw amino-acid sequence, 247 residues long: 5'-nucleotidase SurE (247 aa).

Positions 8, 9, 39, and 95 each coordinate a divalent metal cation.

This sequence belongs to the SurE nucleotidase family. A divalent metal cation serves as cofactor.

It localises to the cytoplasm. It catalyses the reaction a ribonucleoside 5'-phosphate + H2O = a ribonucleoside + phosphate. Its function is as follows. Nucleotidase that shows phosphatase activity on nucleoside 5'-monophosphates. This Thermotoga petrophila (strain ATCC BAA-488 / DSM 13995 / JCM 10881 / RKU-1) protein is 5'-nucleotidase SurE.